The chain runs to 339 residues: Mitogen-activated protein kinase kinase kinase 18 (339 aa).

The Protein kinase domain maps to 3–263 (WTRGKTLGRG…ASQLLNHPFL (261 aa)). Residues 9 to 17 (LGRGSTATV) and lysine 32 contribute to the ATP site. The active-site Proton acceptor is the aspartate 131. A Phosphoserine modification is found at serine 301.

This sequence belongs to the protein kinase superfamily. Ser/Thr protein kinase family. As to quaternary structure, interacts with ABI1. Binds to MKK3. Associates with SRK2E within the nucleus. In terms of processing, autophosphorylated. Unstable protein degraded by the proteasome pathway; this degradation is promoted by ABI1, but blocked by ABA. In terms of tissue distribution, expressed in roots, leaves and flowers.

The protein resides in the nucleus. It catalyses the reaction L-seryl-[protein] + ATP = O-phospho-L-seryl-[protein] + ADP + H(+). The catalysed reaction is L-threonyl-[protein] + ATP = O-phospho-L-threonyl-[protein] + ADP + H(+). Kinase activity is activated by abscisic acid (ABA). Inhibited by ABI1. Activated by SRK2E. In terms of biological role, component of the abscisic acid (ABA) signaling pathway that acts as ABA signal transducer in the context of abiotic stresses. Triggers MPK1, MPK2, MPK7 and MPK14 activation in a MKK3-dependent manner and MPK6 activation in a MKK3-independent manner. Mediates the ABA-dependent activation of the MKK3-MPK7 module. Positive regulator of ABA responses leading to the induction of gene expression (e.g. RD29B and RAB18) and involved in various responses including stomatal development, stomatal movement, inhibition of germination and root growth. Promotes leaf senescence. The protein is Mitogen-activated protein kinase kinase kinase 18 of Arabidopsis thaliana (Mouse-ear cress).